We begin with the raw amino-acid sequence, 340 residues long: uncharacterized protein (340 aa).

The N-terminal stretch at Met-1 to Ala-20 is a signal peptide.

This is an uncharacterized protein from Mycobacterium tuberculosis (strain CDC 1551 / Oshkosh).